Here is a 123-residue protein sequence, read N- to C-terminus: Hydrogenase maturation factor HypA (123 aa).

Histidine 2 lines the Ni(2+) pocket. Zn(2+) contacts are provided by cysteine 73, cysteine 76, cysteine 90, and cysteine 93.

It belongs to the HypA/HybF family.

Its function is as follows. Involved in the maturation of [NiFe] hydrogenases. Required for nickel insertion into the metal center of the hydrogenase. This is Hydrogenase maturation factor HypA from Roseiflexus sp. (strain RS-1).